Here is a 110-residue protein sequence, read N- to C-terminus: Large ribosomal subunit protein uL22 (110 aa).

The protein belongs to the universal ribosomal protein uL22 family. As to quaternary structure, part of the 50S ribosomal subunit.

Functionally, this protein binds specifically to 23S rRNA; its binding is stimulated by other ribosomal proteins, e.g. L4, L17, and L20. It is important during the early stages of 50S assembly. It makes multiple contacts with different domains of the 23S rRNA in the assembled 50S subunit and ribosome. In terms of biological role, the globular domain of the protein is located near the polypeptide exit tunnel on the outside of the subunit, while an extended beta-hairpin is found that lines the wall of the exit tunnel in the center of the 70S ribosome. The sequence is that of Large ribosomal subunit protein uL22 from Pseudoalteromonas atlantica (strain T6c / ATCC BAA-1087).